We begin with the raw amino-acid sequence, 97 residues long: Kunitz-type trypsin inhibitor 1 (97 aa).

Belongs to the protease inhibitor I3 (leguminous Kunitz-type inhibitor) family.

In terms of biological role, exhibits Kunitz trypsin protease inhibitor activity. The protein is Kunitz-type trypsin inhibitor 1 of Selenicereus costaricensis (Red-fleshed dragon fruit).